A 314-amino-acid chain; its full sequence is UPF0761 membrane protein VIBHAR_00593 (314 aa).

The next 6 helical transmembrane spans lie at 41–61 (YLAY…LSIL), 104–124 (MTAV…SNID), 143–163 (FSMY…SIAV), 185–205 (FLRW…YFLV), 217–237 (IGAA…AFYI), and 249–269 (ALAA…IVLI).

The protein belongs to the UPF0761 family.

The protein resides in the cell inner membrane. The protein is UPF0761 membrane protein VIBHAR_00593 of Vibrio campbellii (strain ATCC BAA-1116).